The chain runs to 505 residues: 2,3-bisphosphoglycerate-independent phosphoglycerate mutase (505 aa).

Asp-11 and Ser-61 together coordinate Mn(2+). The Phosphoserine intermediate role is filled by Ser-61. Residues His-122, 152-153 (RD), Arg-184, Arg-190, 258-261 (RPDR), and Lys-331 each bind substrate. Mn(2+) is bound by residues Asp-396, His-400, Asp-437, His-438, and His-455.

Belongs to the BPG-independent phosphoglycerate mutase family. Monomer. Mn(2+) serves as cofactor.

The enzyme catalyses (2R)-2-phosphoglycerate = (2R)-3-phosphoglycerate. It participates in carbohydrate degradation; glycolysis; pyruvate from D-glyceraldehyde 3-phosphate: step 3/5. In terms of biological role, catalyzes the interconversion of 2-phosphoglycerate and 3-phosphoglycerate. The protein is 2,3-bisphosphoglycerate-independent phosphoglycerate mutase of Mesomycoplasma hyopneumoniae (strain 7448) (Mycoplasma hyopneumoniae).